A 188-amino-acid polypeptide reads, in one-letter code: Elongation factor P (188 aa).

It belongs to the elongation factor P family.

It is found in the cytoplasm. The protein operates within protein biosynthesis; polypeptide chain elongation. Its function is as follows. Involved in peptide bond synthesis. Stimulates efficient translation and peptide-bond synthesis on native or reconstituted 70S ribosomes in vitro. Probably functions indirectly by altering the affinity of the ribosome for aminoacyl-tRNA, thus increasing their reactivity as acceptors for peptidyl transferase. This is Elongation factor P from Chlorobium chlorochromatii (strain CaD3).